We begin with the raw amino-acid sequence, 403 residues long: Subtilisin-like protease CPC735_035780 (403 aa).

Residues 1–19 form the signal peptide; the sequence is MSIMKIATLFFAALSAVEA. Residues 20 to 117 constitute a propeptide that is removed on maturation; that stretch reads AKLLTPSDKR…VEPDRRVHLT (98 aa). Residues 35–116 form the Inhibitor I9 domain; the sequence is SYIVVMKDNV…YVEPDRRVHL (82 aa). The region spanning 127-403 is the Peptidase S8 domain; sequence SWGLGRISHR…NKLLYNNSGR (277 aa). Residues Asp159 and His190 each act as charge relay system in the active site. 2 N-linked (GlcNAc...) asparagine glycosylation sites follow: Asn233 and Asn251. The Charge relay system role is filled by Ser349. Residue Asn399 is glycosylated (N-linked (GlcNAc...) asparagine).

It belongs to the peptidase S8 family.

Its subcellular location is the secreted. In terms of biological role, secreted subtilisin-like serine protease with keratinolytic activity that contributes to pathogenicity. This Coccidioides posadasii (strain C735) (Valley fever fungus) protein is Subtilisin-like protease CPC735_035780.